The following is a 334-amino-acid chain: N-acetyl-gamma-glutamyl-phosphate reductase (334 aa).

Cysteine 154 is an active-site residue.

Belongs to the NAGSA dehydrogenase family. Type 1 subfamily.

Its subcellular location is the cytoplasm. The catalysed reaction is N-acetyl-L-glutamate 5-semialdehyde + phosphate + NADP(+) = N-acetyl-L-glutamyl 5-phosphate + NADPH + H(+). The protein operates within amino-acid biosynthesis; L-arginine biosynthesis; N(2)-acetyl-L-ornithine from L-glutamate: step 3/4. Its function is as follows. Catalyzes the NADPH-dependent reduction of N-acetyl-5-glutamyl phosphate to yield N-acetyl-L-glutamate 5-semialdehyde. The protein is N-acetyl-gamma-glutamyl-phosphate reductase of Salmonella typhimurium (strain LT2 / SGSC1412 / ATCC 700720).